The primary structure comprises 395 residues: Ribosomal RNA large subunit methyltransferase G (395 aa).

The protein belongs to the methyltransferase superfamily. RlmG family.

The protein resides in the cytoplasm. It carries out the reaction guanosine(1835) in 23S rRNA + S-adenosyl-L-methionine = N(2)-methylguanosine(1835) in 23S rRNA + S-adenosyl-L-homocysteine + H(+). In terms of biological role, specifically methylates the guanine in position 1835 (m2G1835) of 23S rRNA. The polypeptide is Ribosomal RNA large subunit methyltransferase G (Yersinia pestis (strain Pestoides F)).